Reading from the N-terminus, the 583-residue chain is Leucine aminopeptidase 2, chloroplastic (583 aa).

Residues 1-70 constitute a chloroplast transit peptide; that stretch reads MAVTLVTSFA…ISHATLGLTQ (70 aa). 2 residues coordinate Mn(2+): K351 and D356. K363 is an active-site residue. Residues D376, D436, and E438 each contribute to the Mn(2+) site. Residue R440 is part of the active site.

This sequence belongs to the peptidase M17 family. Homohexamer (dimer of homotrimers). Mn(2+) serves as cofactor.

Its subcellular location is the plastid. The protein localises to the chloroplast. It carries out the reaction Release of an N-terminal amino acid, Xaa-|-Yaa-, in which Xaa is preferably Leu, but may be other amino acids including Pro although not Arg or Lys, and Yaa may be Pro. Amino acid amides and methyl esters are also readily hydrolyzed, but rates on arylamides are exceedingly low.. The catalysed reaction is Release of N-terminal proline from a peptide.. Presumably involved in the processing and regular turnover of intracellular proteins. Catalyzes the removal of unsubstituted N-terminal amino acids from various peptides. Possesses leucine aminopeptidase activity against the model substrate leucine-amido methyl coumarin. Does not seem to possess Cys-Gly dipeptidase activity. Its function is as follows. Functions as a molecular chaperone to protect proteins from heat-induced damage. This is Leucine aminopeptidase 2, chloroplastic from Arabidopsis thaliana (Mouse-ear cress).